The sequence spans 144 residues: MGTPVKILVVRNHILFSVVVLLAVAQSSYLPPCEPVNETVAVEKEGCPKCLVLQTTICSGHCLTKEPVYKSPFSTVYQHVCTYRDVRYETVRLPDCPPGVDPHITYPVALSCDCSLCTMDTSDCTIESLQPDFCMSQREDFLVY.

An N-terminal signal peptide occupies residues 1 to 27; sequence MGTPVKILVVRNHILFSVVVLLAVAQS. Cystine bridges form between cysteine 33–cysteine 81, cysteine 47–cysteine 96, cysteine 50–cysteine 134, cysteine 58–cysteine 112, cysteine 62–cysteine 114, and cysteine 117–cysteine 124. Asparagine 37 carries N-linked (GlcNAc...) asparagine glycosylation. The propeptide occupies 143–144; sequence VY.

It belongs to the glycoprotein hormones subunit beta family. Heterodimer of an alpha and a beta chain.

Its subcellular location is the secreted. Its function is as follows. Involved in gametogenesis and steroidogenesis. The sequence is that of Gonadotropin subunit beta-2 (cgbb) from Cyprinus carpio (Common carp).